A 775-amino-acid chain; its full sequence is 5-methyltetrahydropteroyltriglutamate--homocysteine methyltransferase (775 aa).

5-methyltetrahydropteroyltri-L-glutamate contacts are provided by residues 16 to 19 (REMK) and lysine 115. L-homocysteine is bound by residues 435–437 (IGS) and glutamate 488. Residues 435–437 (IGS) and glutamate 488 contribute to the L-methionine site. 5-methyltetrahydropteroyltri-L-glutamate contacts are provided by residues 519-520 (RC) and tryptophan 565. Aspartate 603 contributes to the L-homocysteine binding site. Aspartate 603 is a binding site for L-methionine. Residue glutamate 609 participates in 5-methyltetrahydropteroyltri-L-glutamate binding. Zn(2+) is bound by residues histidine 645, cysteine 647, and glutamate 669. Histidine 698 acts as the Proton donor in catalysis. Cysteine 730 contacts Zn(2+).

Belongs to the vitamin-B12 independent methionine synthase family. Zn(2+) is required as a cofactor.

It carries out the reaction 5-methyltetrahydropteroyltri-L-glutamate + L-homocysteine = tetrahydropteroyltri-L-glutamate + L-methionine. It participates in amino-acid biosynthesis; L-methionine biosynthesis via de novo pathway; L-methionine from L-homocysteine (MetE route): step 1/1. In terms of biological role, catalyzes the transfer of a methyl group from 5-methyltetrahydrofolate to homocysteine resulting in methionine formation. The chain is 5-methyltetrahydropteroyltriglutamate--homocysteine methyltransferase from Coxiella burnetii (strain RSA 331 / Henzerling II).